A 190-amino-acid chain; its full sequence is ATP synthase subunit C lysine N-methyltransferase (190 aa).

The protein belongs to the ANT/ATPSC lysine N-methyltransferase family.

It localises to the mitochondrion. The enzyme catalyses L-lysyl-[protein] + 3 S-adenosyl-L-methionine = N(6),N(6),N(6)-trimethyl-L-lysyl-[protein] + 3 S-adenosyl-L-homocysteine + 3 H(+). Its function is as follows. Mitochondrial protein-lysine N-methyltransferase that trimethylates ATP synthase subunit C. Trimethylation is required for proper incorporation of the C subunit into the ATP synthase complex and mitochondrial respiration. This Caenorhabditis elegans protein is ATP synthase subunit C lysine N-methyltransferase.